A 347-amino-acid polypeptide reads, in one-letter code: UPF0284 protein M1425_0030 (347 aa).

The protein belongs to the UPF0284 family.

The polypeptide is UPF0284 protein M1425_0030 (Saccharolobus islandicus (strain M.14.25 / Kamchatka #1) (Sulfolobus islandicus)).